Reading from the N-terminus, the 104-residue chain is Large ribosomal subunit protein uL24 (104 aa).

The protein belongs to the universal ribosomal protein uL24 family. In terms of assembly, part of the 50S ribosomal subunit.

In terms of biological role, one of two assembly initiator proteins, it binds directly to the 5'-end of the 23S rRNA, where it nucleates assembly of the 50S subunit. Its function is as follows. One of the proteins that surrounds the polypeptide exit tunnel on the outside of the subunit. The protein is Large ribosomal subunit protein uL24 of Azotobacter vinelandii (strain DJ / ATCC BAA-1303).